Here is a 359-residue protein sequence, read N- to C-terminus: Peptide chain release factor 1 (359 aa).

Glutamine 235 is modified (N5-methylglutamine).

It belongs to the prokaryotic/mitochondrial release factor family. Methylated by PrmC. Methylation increases the termination efficiency of RF1.

The protein resides in the cytoplasm. Its function is as follows. Peptide chain release factor 1 directs the termination of translation in response to the peptide chain termination codons UAG and UAA. The sequence is that of Peptide chain release factor 1 from Nitrosomonas europaea (strain ATCC 19718 / CIP 103999 / KCTC 2705 / NBRC 14298).